Here is a 569-residue protein sequence, read N- to C-terminus: Isochorismate synthase 1, chloroplastic (569 aa).

A chloroplast-targeting transit peptide spans 1-45 (MASLQFSSQFLGSNTKTHSSIISISRSYSPTPFTRFSRKKYESCS).

This sequence belongs to the isochorismate synthase family. Monomer. Requires Mg(2+) as cofactor. In terms of tissue distribution, leaves.

It localises to the plastid. The protein resides in the chloroplast. The enzyme catalyses chorismate = isochorismate. The protein operates within siderophore biosynthesis; salicylate biosynthesis. In terms of biological role, isochorismate synthase involved in the synthesis of salicylic acid (SA) required for both local and systemic acquired resistance (LAR and SAR) while SA synthesized through the phenylalanine ammonium lyase (PAL) pathway seems to potentiate plant cell death. Also involved in phylloquinone (vitamin K1) synthesis. Has no isochorismate pyruvate lyase (IPL) activity. The polypeptide is Isochorismate synthase 1, chloroplastic (ICS1) (Arabidopsis thaliana (Mouse-ear cress)).